Reading from the N-terminus, the 211-residue chain is Protein-methionine-sulfoxide reductase heme-binding subunit MsrQ (211 aa).

Transmembrane regions (helical) follow at residues 45-65 (HFTG…TPLA), 82-102 (LWCF…ELGV), 116-136 (PYLT…FTST), 153-173 (FVYL…KIIS), and 178-198 (IYAG…LSLF).

It belongs to the MsrQ family. As to quaternary structure, heterodimer of a catalytic subunit (MsrP) and a heme-binding subunit (MsrQ). FMN is required as a cofactor. Heme b serves as cofactor.

The protein localises to the cell inner membrane. Functionally, part of the MsrPQ system that repairs oxidized periplasmic proteins containing methionine sulfoxide residues (Met-O), using respiratory chain electrons. Thus protects these proteins from oxidative-stress damage caused by reactive species of oxygen and chlorine generated by the host defense mechanisms. MsrPQ is essential for the maintenance of envelope integrity under bleach stress, rescuing a wide series of structurally unrelated periplasmic proteins from methionine oxidation, including the primary periplasmic chaperone SurA and the lipoprotein Pal. MsrQ provides electrons for reduction to the reductase catalytic subunit MsrP, using the quinone pool of the respiratory chain. In Escherichia coli O127:H6 (strain E2348/69 / EPEC), this protein is Protein-methionine-sulfoxide reductase heme-binding subunit MsrQ.